Here is a 290-residue protein sequence, read N- to C-terminus: ATP synthase gamma chain (290 aa).

It belongs to the ATPase gamma chain family. F-type ATPases have 2 components, CF(1) - the catalytic core - and CF(0) - the membrane proton channel. CF(1) has five subunits: alpha(3), beta(3), gamma(1), delta(1), epsilon(1). CF(0) has three main subunits: a, b and c.

Its subcellular location is the cell membrane. Its function is as follows. Produces ATP from ADP in the presence of a proton gradient across the membrane. The gamma chain is believed to be important in regulating ATPase activity and the flow of protons through the CF(0) complex. In Chloroflexus aurantiacus (strain ATCC 29366 / DSM 635 / J-10-fl), this protein is ATP synthase gamma chain.